The chain runs to 414 residues: Transcription factor FAMA (414 aa).

Disordered stretches follow at residues 1–61 (MDKD…TPFD) and 142–197 (KEDQ…SQRM). Low complexity-rich tracts occupy residues 12-24 (GESS…NSSG) and 35-49 (QQQQ…QQHQ). The segment covering 166-175 (RENKNVTKKE) has biased composition (basic and acidic residues). The span at 176-185 (VKSKRKRART) shows a compositional bias: basic residues. Residues 187–197 (KTSEEVESQRM) are compositionally biased toward basic and acidic residues. The bHLH domain occupies 194–245 (SQRMTHIAVERNRRKQMNEHLRVLRSLMPGSYVQRGDQASIIGGAIEFVREL). Positions 249–253 (LQCLE) match the LxCxE motif motif.

As to quaternary structure, interacts with FAMA through its LxCxE motif. Self-interacts. Also interacts with bHLH071 and bHLH093. Interacts with RBR1. As to expression, resctricted to stomatal cell lineages (at protein level). Expressed in roots, leaves, stems, and flowers.

Its subcellular location is the nucleus. Its function is as follows. Transcription activator. Together with MYB88 and MYB124, ensures that stomata contain just two guard cells (GCs) by enforcing a single symmetric precursor cell division before stomatal maturity. Together with SPCH and MUTE, regulates the stomata formation. Required to promote differentiation and morphogenesis of stomatal guard cells and to halt proliferative divisions in their immediate precursors. Mediates the formation of stomata. Prevents histone H3K27me3 marks and derepresses stem cell gene expression. The chain is Transcription factor FAMA (FAMA) from Arabidopsis thaliana (Mouse-ear cress).